Consider the following 380-residue polypeptide: Cytochrome b (380 aa).

4 helical membrane-spanning segments follow: residues 34-54 (FGSLLGVCLIAQIATGLFLAM), 78-99 (WLLRNLHANGASFFFICIYFHI), 114-134 (WNIGVILLFLVMATAFVGYVL), and 179-199 (FFTFHFILPFIIAAASMIHLL). Residues His-84 and His-98 each coordinate heme b. Positions 183 and 197 each coordinate heme b. His-202 provides a ligand contact to a ubiquinone. Transmembrane regions (helical) follow at residues 227–247 (YKDLLGFVIMLGALASLSTFA), 289–309 (LGGVLALLLSIMVLFLMPIIH), 321–341 (IAKTFFWALIANTAILTWIGG), and 348–368 (FITIGQIASGLYFLIFVLLIP).

The protein belongs to the cytochrome b family. As to quaternary structure, the cytochrome bc1 complex contains 3 respiratory subunits (MT-CYB, CYC1 and UQCRFS1), 2 core proteins (UQCRC1 and UQCRC2) and probably 6 low-molecular weight proteins. The cofactor is heme b.

It localises to the mitochondrion inner membrane. In terms of biological role, component of the ubiquinol-cytochrome c reductase complex (complex III or cytochrome b-c1 complex) that is part of the mitochondrial respiratory chain. The b-c1 complex mediates electron transfer from ubiquinol to cytochrome c. Contributes to the generation of a proton gradient across the mitochondrial membrane that is then used for ATP synthesis. This is Cytochrome b (mt-cyb) from Pelophylax nigromaculatus (Black-spotted frog).